A 1147-amino-acid polypeptide reads, in one-letter code: ATP-dependent helicase/deoxyribonuclease subunit B (1147 aa).

G8–S15 serves as a coordination point for ATP. [4Fe-4S] cluster-binding residues include C780, C1092, C1095, and C1101.

This sequence belongs to the helicase family. AddB/RexB type 1 subfamily. Heterodimer of AddA and AddB. It depends on Mg(2+) as a cofactor. [4Fe-4S] cluster serves as cofactor.

The heterodimer acts as both an ATP-dependent DNA helicase and an ATP-dependent, dual-direction single-stranded exonuclease. Recognizes the chi site generating a DNA molecule suitable for the initiation of homologous recombination. The AddB subunit has 5' -&gt; 3' nuclease activity but not helicase activity. The protein is ATP-dependent helicase/deoxyribonuclease subunit B of Lachnoclostridium phytofermentans (strain ATCC 700394 / DSM 18823 / ISDg) (Clostridium phytofermentans).